The following is a 485-amino-acid chain: Probable glycine dehydrogenase (decarboxylating) subunit 2 (485 aa).

An N6-(pyridoxal phosphate)lysine modification is found at Lys273.

This sequence belongs to the GcvP family. C-terminal subunit subfamily. The glycine cleavage system is composed of four proteins: P, T, L and H. In this organism, the P 'protein' is a heterodimer of two subunits. Pyridoxal 5'-phosphate is required as a cofactor.

It carries out the reaction N(6)-[(R)-lipoyl]-L-lysyl-[glycine-cleavage complex H protein] + glycine + H(+) = N(6)-[(R)-S(8)-aminomethyldihydrolipoyl]-L-lysyl-[glycine-cleavage complex H protein] + CO2. Functionally, the glycine cleavage system catalyzes the degradation of glycine. The P protein binds the alpha-amino group of glycine through its pyridoxal phosphate cofactor; CO(2) is released and the remaining methylamine moiety is then transferred to the lipoamide cofactor of the H protein. This Caldanaerobacter subterraneus subsp. tengcongensis (strain DSM 15242 / JCM 11007 / NBRC 100824 / MB4) (Thermoanaerobacter tengcongensis) protein is Probable glycine dehydrogenase (decarboxylating) subunit 2.